The primary structure comprises 366 residues: Histidinol-phosphate aminotransferase 2 (366 aa).

Residues 1 to 11 (MQVKDQLSSLQ) show a composition bias toward polar residues. Residues 1–21 (MQVKDQLSSLQPYKPGKSPEQ) are disordered. K222 carries the post-translational modification N6-(pyridoxal phosphate)lysine.

It belongs to the class-II pyridoxal-phosphate-dependent aminotransferase family. Histidinol-phosphate aminotransferase subfamily. As to quaternary structure, homodimer. Pyridoxal 5'-phosphate serves as cofactor.

The enzyme catalyses L-histidinol phosphate + 2-oxoglutarate = 3-(imidazol-4-yl)-2-oxopropyl phosphate + L-glutamate. Its pathway is amino-acid biosynthesis; L-histidine biosynthesis; L-histidine from 5-phospho-alpha-D-ribose 1-diphosphate: step 7/9. The protein is Histidinol-phosphate aminotransferase 2 of Bacillus cereus (strain ATCC 10987 / NRS 248).